The following is a 430-amino-acid chain: Pre-B-cell leukemia transcription factor 1 (430 aa).

The interval 1–40 is disordered; the sequence is MDEQPRLMHSHAGVGMAGHPGLSQHLQDGAGGTEGEGGRK. Residues 38–232 form the PBC domain; that stretch reads GRKQDIGDIL…VMILRSRFLD (195 aa). Residues 45 to 124 are PBC-A; that stretch reads DILQQIMTIT…EGVAGPEKGG (80 aa). Positions 127–232 are PBC-B; sequence AAAAAAAAAS…VMILRSRFLD (106 aa). A DNA-binding region (homeobox; TALE-type) is located at residues 233 to 295; sequence ARRKRRNFNK…NKRIRYKKNI (63 aa). Disordered stretches follow at residues 317–338 and 395–430; these read SAHGSQANSPSTPNSAGSSSSF and SPQGISANGGWQDATTPSSVTSPTEGPGSVHSDTSN. Low complexity predominate over residues 323-338; sequence ANSPSTPNSAGSSSSF. Over residues 407 to 418 the composition is skewed to polar residues; that stretch reads DATTPSSVTSPT.

This sequence belongs to the TALE/PBX homeobox family. Forms a heterodimer with MEIS1 which binds DNA. The PBX1-MEIS1 heterodimer binds a cAMP-responsive sequence in CYP17. It also binds a consensus region in the SOX3 promoter. PBX1 forms heterotrimers with MEIS1 and a number of HOX proteins including HOXA9, HOXD4, HOXD9 and HOXD10. Forms heterodimers with HOXA1, HOXA5, HOXB7 and HOXB8 which bind the 5'-TGATTGAT-3' consensus sequence. Also forms heterodimers with HOXA5, HOXB7, HOXB8, HOXC8 and HOXD4 which bind the 5'-ATCAATCAA-3' consensus sequence. Interacts with PBXIP1. Interacts with TLX1. Interacts with FOXC1. Interacts with MN1. As to quaternary structure, interacts with MEIS2 isoform 4, SP1, SP3 and KLF4. In terms of assembly, part of a PDX1:PBX1b:MEIS2B complex; PBX1b recruits MEIS2B to the complex. Expressed in the kidney. Expressed in the endothelial cells of the glomeruli and interstitium (at protein level). Expressed in all tissues except in cells of the B and T lineage. Expressed strongly in kidney and brain.

The protein localises to the nucleus. Transcription factor which binds the DNA sequence 5'-TGATTGAT-3' as part of a heterodimer with HOX proteins such as HOXA1, HOXA5, HOXB7 and HOXB8. Binds to the DNA sequence 5'-TGATTGAC-3' in complex with a nuclear factor which is not a class I HOX protein. Has also been shown to bind the DNA sequence 5'-ATCAATCAA-3' cooperatively with HOXA5, HOXB7, HOXB8, HOXC8 and HOXD4. Acts as a transcriptional activator of PF4 in complex with MEIS1. Also activates transcription of SOX3 in complex with MEIS1 by binding to the 5'-TGATTGAC-3' consensus sequence. In natural killer cells, binds to the NFIL3 promoter and acts as a transcriptional activator of NFIL3, promoting natural killer cell development. Plays a role in the cAMP-dependent regulation of CYP17A1 gene expression via its cAMP-regulatory sequence (CRS1). Probably in complex with MEIS2, involved in transcriptional regulation by KLF4. Acts as a transcriptional activator of NKX2-5 and a transcriptional repressor of CDKN2B. Together with NKX2-5, required for spleen development through a mechanism that involves CDKN2B repression. In terms of biological role, as part of a PDX1:PBX1b:MEIS2B complex in pancreatic acinar cells, is involved in the transcriptional activation of the ELA1 enhancer; the complex binds to the enhancer B element and cooperates with the transcription factor 1 complex (PTF1) bound to the enhancer A element. This is Pre-B-cell leukemia transcription factor 1 (PBX1) from Homo sapiens (Human).